We begin with the raw amino-acid sequence, 293 residues long: Peptidoglycan deacetylase (293 aa).

D14, H86, and H90 together coordinate Zn(2+). Positions 29-276 (PDDISRGLFA…INKHEGVRWV (248 aa)) constitute a NodB homology domain.

This sequence belongs to the polysaccharide deacetylase family. Homotetramer.

It catalyses the reaction Deacetylation of xylans and xylo-oligosaccharides.. Its function is as follows. Catalyzes the N-deacetylation of peptidoglycan (PG), an important mechanism that appears to confer lysozyme resistance and to mitigate host immune detection; this likely contributes to pathogen persistence in the host. The exact nature of the residue in PG that is deacetylated has not been determined. Is also able to catalyze the deacetylation of acetylated xylan, and, to a lesser extent, that of chitin and chitosan. Therefore, this enzyme might play a role during infection, considering that xylan-containing carbohydrate structures are among those commonly consumed by humans. The polypeptide is Peptidoglycan deacetylase (pgdA) (Helicobacter pylori (strain ATCC 700392 / 26695) (Campylobacter pylori)).